A 33-amino-acid chain; its full sequence is Brevinin-2Rh (33 aa).

Cysteine 27 and cysteine 33 form a disulfide bridge.

In terms of tissue distribution, expressed by the skin glands.

It is found in the secreted. In terms of biological role, antimicrobial peptide. The sequence is that of Brevinin-2Rh from Pelophylax ridibundus (Marsh frog).